The chain runs to 225 residues: Cytidylate kinase (225 aa).

12-20 is a binding site for ATP; the sequence is GPSGAGKGT.

The protein belongs to the cytidylate kinase family. Type 1 subfamily.

It localises to the cytoplasm. It catalyses the reaction CMP + ATP = CDP + ADP. The enzyme catalyses dCMP + ATP = dCDP + ADP. The protein is Cytidylate kinase of Vibrio cholerae serotype O1 (strain ATCC 39315 / El Tor Inaba N16961).